The sequence spans 181 residues: NADH-quinone oxidoreductase subunit B (181 aa).

[4Fe-4S] cluster-binding residues include cysteine 60, cysteine 61, cysteine 125, and cysteine 155.

The protein belongs to the complex I 20 kDa subunit family. NDH-1 is composed of 14 different subunits. Subunits NuoB, C, D, E, F, and G constitute the peripheral sector of the complex. [4Fe-4S] cluster serves as cofactor.

Its subcellular location is the cell inner membrane. The catalysed reaction is a quinone + NADH + 5 H(+)(in) = a quinol + NAD(+) + 4 H(+)(out). NDH-1 shuttles electrons from NADH, via FMN and iron-sulfur (Fe-S) centers, to quinones in the respiratory chain. Couples the redox reaction to proton translocation (for every two electrons transferred, four hydrogen ions are translocated across the cytoplasmic membrane), and thus conserves the redox energy in a proton gradient. This is NADH-quinone oxidoreductase subunit B from Novosphingobium aromaticivorans (strain ATCC 700278 / DSM 12444 / CCUG 56034 / CIP 105152 / NBRC 16084 / F199).